The primary structure comprises 468 residues: Ribulose bisphosphate carboxylase large chain (468 aa).

K5 is modified (N6,N6,N6-trimethyllysine). Substrate-binding residues include N114 and T164. Catalysis depends on K166, which acts as the Proton acceptor. K168 contributes to the substrate binding site. Mg(2+) is bound by residues K192, D194, and E195. Position 192 is an N6-carboxylysine (K192). H285 functions as the Proton acceptor in the catalytic mechanism. R286, H318, and S370 together coordinate substrate.

It belongs to the RuBisCO large chain family. Type I subfamily. As to quaternary structure, heterohexadecamer of 8 large chains and 8 small chains; disulfide-linked. The disulfide link is formed within the large subunit homodimers. Mg(2+) is required as a cofactor. In terms of processing, the disulfide bond which can form in the large chain dimeric partners within the hexadecamer appears to be associated with oxidative stress and protein turnover.

It localises to the plastid. It is found in the chloroplast. The catalysed reaction is 2 (2R)-3-phosphoglycerate + 2 H(+) = D-ribulose 1,5-bisphosphate + CO2 + H2O. It carries out the reaction D-ribulose 1,5-bisphosphate + O2 = 2-phosphoglycolate + (2R)-3-phosphoglycerate + 2 H(+). Its function is as follows. RuBisCO catalyzes two reactions: the carboxylation of D-ribulose 1,5-bisphosphate, the primary event in carbon dioxide fixation, as well as the oxidative fragmentation of the pentose substrate in the photorespiration process. Both reactions occur simultaneously and in competition at the same active site. The protein is Ribulose bisphosphate carboxylase large chain of Tecoma stans (Yellow bells).